Consider the following 152-residue polypeptide: 6,7-dimethyl-8-ribityllumazine synthase (152 aa).

5-amino-6-(D-ribitylamino)uracil contacts are provided by residues Phe-18, 49–51 (ALE), and 75–77 (CVI). 80 to 81 (ET) contacts (2S)-2-hydroxy-3-oxobutyl phosphate. His-83 (proton donor) is an active-site residue. Asn-108 provides a ligand contact to 5-amino-6-(D-ribitylamino)uracil. Position 122 (Arg-122) interacts with (2S)-2-hydroxy-3-oxobutyl phosphate.

The protein belongs to the DMRL synthase family.

It catalyses the reaction (2S)-2-hydroxy-3-oxobutyl phosphate + 5-amino-6-(D-ribitylamino)uracil = 6,7-dimethyl-8-(1-D-ribityl)lumazine + phosphate + 2 H2O + H(+). Its pathway is cofactor biosynthesis; riboflavin biosynthesis; riboflavin from 2-hydroxy-3-oxobutyl phosphate and 5-amino-6-(D-ribitylamino)uracil: step 1/2. Its function is as follows. Catalyzes the formation of 6,7-dimethyl-8-ribityllumazine by condensation of 5-amino-6-(D-ribitylamino)uracil with 3,4-dihydroxy-2-butanone 4-phosphate. This is the penultimate step in the biosynthesis of riboflavin. The protein is 6,7-dimethyl-8-ribityllumazine synthase of Bartonella bacilliformis (strain ATCC 35685 / KC583 / Herrer 020/F12,63).